The sequence spans 458 residues: ATP synthase subunit beta (458 aa).

Position 148 to 155 (148 to 155 (GGAGVGKT)) interacts with ATP.

It belongs to the ATPase alpha/beta chains family. In terms of assembly, F-type ATPases have 2 components, CF(1) - the catalytic core - and CF(0) - the membrane proton channel. CF(1) has five subunits: alpha(3), beta(3), gamma(1), delta(1), epsilon(1). CF(0) has three main subunits: a(1), b(2) and c(9-12). The alpha and beta chains form an alternating ring which encloses part of the gamma chain. CF(1) is attached to CF(0) by a central stalk formed by the gamma and epsilon chains, while a peripheral stalk is formed by the delta and b chains.

Its subcellular location is the cell inner membrane. The catalysed reaction is ATP + H2O + 4 H(+)(in) = ADP + phosphate + 5 H(+)(out). Produces ATP from ADP in the presence of a proton gradient across the membrane. The catalytic sites are hosted primarily by the beta subunits. This Shewanella piezotolerans (strain WP3 / JCM 13877) protein is ATP synthase subunit beta.